The chain runs to 334 residues: MSSVLQKLITPLASSSAEPPRNKVTVVGVGQVGMACAVSILLRDLCDELALVDVMEDRLKGEMMDLQHGLLFLKTSKVVADKDYAVTANSRLVVVTAGVRQQEGESRLNLVQRNVNVFKCIIPQIIKYSPNCTILVVSNPVDVLTYVTWKLSGLPKHRVIGSGTNLDSARFRYMMAERLGIHASAFNGWVLGEHGDTSVPVWSGANVAGVSLQKLNPEIGTDGDKEQWKATHKAVVDSAYEVIKLKGYTNWAIGFSVADLTESIVKNLSRVHPVSTMVKDMFGIGEEVFLSLPCVLNGSGVGSVVNMTLTDAEVAQLKKSADTLWGIQKDLKDL.

NAD(+) contacts are provided by residues 30–58 (GQVGMACAVSILLRDLCDELALVDVMEDR) and arginine 100. Substrate contacts are provided by arginine 107, asparagine 139, and arginine 170. Asparagine 139 contributes to the NAD(+) binding site. The Proton acceptor role is filled by histidine 194. Substrate is bound at residue threonine 249.

It belongs to the LDH/MDH superfamily. LDH family. In terms of assembly, homotetramer.

The protein localises to the cytoplasm. The enzyme catalyses (S)-lactate + NAD(+) = pyruvate + NADH + H(+). Its pathway is fermentation; pyruvate fermentation to lactate; (S)-lactate from pyruvate: step 1/1. Functionally, interconverts simultaneously and stereospecifically pyruvate and lactate with concomitant interconversion of NADH and NAD(+). The chain is L-lactate dehydrogenase B chain (ldhb) from Fundulus heteroclitus (Killifish).